The primary structure comprises 434 residues: Serine hydroxymethyltransferase (434 aa).

Residue 120-122 (GHI) coordinates (6S)-5,6,7,8-tetrahydrofolate. At lysine 236 the chain carries N6-(pyridoxal phosphate)lysine. Glutamate 255 serves as a coordination point for (6S)-5,6,7,8-tetrahydrofolate.

It belongs to the SHMT family. Homodimer. It depends on pyridoxal 5'-phosphate as a cofactor.

The protein resides in the cytoplasm. Its pathway is amino-acid biosynthesis; glycine biosynthesis; glycine from L-serine: step 1/1. In terms of biological role, catalyzes the reversible interconversion of serine and glycine with a modified folate serving as the one-carbon carrier. Also exhibits a pteridine-independent aldolase activity toward beta-hydroxyamino acids, producing glycine and aldehydes, via a retro-aldol mechanism. This chain is Serine hydroxymethyltransferase, found in Korarchaeum cryptofilum (strain OPF8).